The chain runs to 231 residues: MLTRKQHELLVYIDQHLRRTGCSPSFEEMKEALDLKSKSGIHRLIGALEERGFLRRHKHRARALEVLRLPSDAAADRPDTGFAPNVIRGDFTARLQGARAADPAAAITLPLYGRIAAGQPIEALREHQAEIEIPASLVGPGEHYALEVAGDSMVDAGILDGDTAIIRRGETAETGQIVVALIDDVEVTLKRLRRRGNSTALEPANPRYEIRIFPAERVKVQGRLVALFRRY.

A DNA-binding region (H-T-H motif) is located at residues 26 to 46 (FEEMKEALDLKSKSGIHRLIG). Active-site for autocatalytic cleavage activity residues include Ser-152 and Lys-190.

It belongs to the peptidase S24 family. In terms of assembly, homodimer.

The catalysed reaction is Hydrolysis of Ala-|-Gly bond in repressor LexA.. Represses a number of genes involved in the response to DNA damage (SOS response), including recA and lexA. In the presence of single-stranded DNA, RecA interacts with LexA causing an autocatalytic cleavage which disrupts the DNA-binding part of LexA, leading to derepression of the SOS regulon and eventually DNA repair. The polypeptide is LexA repressor (Acidiphilium cryptum (strain JF-5)).